A 102-amino-acid polypeptide reads, in one-letter code: Small ribosomal subunit protein uS10 (102 aa).

The disordered stretch occupies residues 34 to 61 (MAGPIPLPTKTLKVTTRKSTDGEGSSSF).

This sequence belongs to the universal ribosomal protein uS10 family. In terms of assembly, part of the 30S ribosomal subunit.

Involved in the binding of tRNA to the ribosomes. This chain is Small ribosomal subunit protein uS10, found in Methanococcus aeolicus (strain ATCC BAA-1280 / DSM 17508 / OCM 812 / Nankai-3).